A 251-amino-acid polypeptide reads, in one-letter code: Hydroxyacylglutathione hydrolase (251 aa).

Residues H53, H55, D57, H58, H110, D127, and H165 each coordinate Zn(2+).

Belongs to the metallo-beta-lactamase superfamily. Glyoxalase II family. As to quaternary structure, monomer. It depends on Zn(2+) as a cofactor.

The enzyme catalyses an S-(2-hydroxyacyl)glutathione + H2O = a 2-hydroxy carboxylate + glutathione + H(+). The protein operates within secondary metabolite metabolism; methylglyoxal degradation; (R)-lactate from methylglyoxal: step 2/2. Functionally, thiolesterase that catalyzes the hydrolysis of S-D-lactoyl-glutathione to form glutathione and D-lactic acid. The sequence is that of Hydroxyacylglutathione hydrolase from Yersinia enterocolitica serotype O:8 / biotype 1B (strain NCTC 13174 / 8081).